Reading from the N-terminus, the 283-residue chain is uncharacterized protein (283 aa).

This is an uncharacterized protein from Halobacterium salinarum (strain ATCC 700922 / JCM 11081 / NRC-1) (Halobacterium halobium).